Consider the following 412-residue polypeptide: Putative competence-damage inducible protein (412 aa).

It belongs to the CinA family.

This is Putative competence-damage inducible protein from Bacillus mycoides (strain KBAB4) (Bacillus weihenstephanensis).